The chain runs to 118 residues: Non-specific lipid-transfer protein 1 (118 aa).

The signal sequence occupies residues 1 to 25 (MAGVMKLACLLLACMIVAGPITSNA). 4 disulfide bridges follow: C29–C76, C39–C53, C54–C100, and C74–C114.

It belongs to the plant LTP family. Expressed primarily in epidermal cells.

It is found in the secreted. Its subcellular location is the cell wall. In terms of biological role, plant non-specific lipid-transfer proteins transfer phospholipids as well as galactolipids across membranes. May play a role in wax or cutin deposition in the cell walls of expanding epidermal cells and certain secretory tissues. This chain is Non-specific lipid-transfer protein 1 (LTP1), found in Arabidopsis thaliana (Mouse-ear cress).